Here is a 463-residue protein sequence, read N- to C-terminus: MQFRIEHDTMGEIKVDDSQYWGAQTQRSLENFKIGTEKMPKELIGAFAKLKRSLAVVNHKLGKLSLEKSQAIIKACDCILKGELCGEFPLAIWQTGSGTQTNMNLNEVIANKATEILGGNFREKKLIHPNDDVNMSQSSNDTFPTAMHVVSVLEITHKLLPSLENLLKTFKEKSQQFKEIVKIGRTHLQDATPLTLGQEFSGYASMLEHSKQQILESLEHLRELAIGGTAVGTGLNAHKELSEKVAEELSQFSGVKFISAPNKFHALTSHDAIAYAHGAFKALAANLMKIANDIRWLASGPRCGLGELNIPENEPGSSIMPGKVNPTQCEAMTMVAVQVMGNDTAIGIAASQGNFELNVFKPVIIYNFLQSLRLLSDSMESFNIHCASGIEPNKEKIDYYLHHSLMLVTALNPHVGYENAAKIAKNAHKKGISLKESALELKLLSAEDFDQFVVPEKMIGPKA.

Substrate-binding positions include 97 to 99 (SGT), 128 to 131 (HPND), 138 to 140 (SSN), and threonine 186. Histidine 187 serves as the catalytic Proton donor/acceptor. The active site involves serine 317. Substrate-binding positions include serine 318 and 323–325 (KVN).

Belongs to the class-II fumarase/aspartase family. Fumarase subfamily. In terms of assembly, homotetramer.

Its subcellular location is the cytoplasm. The enzyme catalyses (S)-malate = fumarate + H2O. Its pathway is carbohydrate metabolism; tricarboxylic acid cycle; (S)-malate from fumarate: step 1/1. Functionally, involved in the TCA cycle. Catalyzes the stereospecific interconversion of fumarate to L-malate. The polypeptide is Fumarate hydratase class II (Helicobacter pylori (strain J99 / ATCC 700824) (Campylobacter pylori J99)).